The following is a 277-amino-acid chain: MNTSNQHKAGHVTTRKLLDMKQQGEKISVLTAYDYTMARILDRAGIDVILVGDSASNVFSGHATTLPITIEEMIYHAKAVVRGVHDESGRAMVVVDMPFMSYQISGDEALRNAGKIMKEHGCDALKLEGGKIIADTVKRITDVGIPVMGHLGLMPQSIYKYGSYKVRAQEEQEAEQLLQDARLLEEAGAFAVVLEKIPSALAAEVTLMLTIPTIGIGAGSHCDGQVLVVNDILGLNREFHPRFVRQYANLNNVIDRAVQQYVDDVKQGGFPADDESY.

Mg(2+) is bound by residues Asp-53 and Asp-96. 3-methyl-2-oxobutanoate contacts are provided by residues 53–54 (DS), Asp-96, and Lys-126. Residue Glu-128 coordinates Mg(2+). Glu-195 acts as the Proton acceptor in catalysis.

It belongs to the PanB family. Homodecamer; pentamer of dimers. It depends on Mg(2+) as a cofactor.

The protein resides in the cytoplasm. It catalyses the reaction 3-methyl-2-oxobutanoate + (6R)-5,10-methylene-5,6,7,8-tetrahydrofolate + H2O = 2-dehydropantoate + (6S)-5,6,7,8-tetrahydrofolate. It participates in cofactor biosynthesis; (R)-pantothenate biosynthesis; (R)-pantoate from 3-methyl-2-oxobutanoate: step 1/2. In terms of biological role, catalyzes the reversible reaction in which hydroxymethyl group from 5,10-methylenetetrahydrofolate is transferred onto alpha-ketoisovalerate to form ketopantoate. In Chlorobium phaeobacteroides (strain DSM 266 / SMG 266 / 2430), this protein is 3-methyl-2-oxobutanoate hydroxymethyltransferase.